Reading from the N-terminus, the 197-residue chain is Interleukin-17C (197 aa).

The first 18 residues, 1–18 (MTLLPGLLFLTWLHTCLA), serve as a signal peptide directing secretion. 2 disulfide bridges follow: Cys129/Cys189 and Cys134/Cys191.

Belongs to the IL-17 family. In terms of assembly, binds to a heterodimer formed by IL17RA and IL17RE.

Its subcellular location is the secreted. Its function is as follows. Cytokine that plays a crucial role in innate immunity of the epithelium, including to intestinal bacterial pathogens, in an autocrine manner. Stimulates the production of antibacterial peptides and pro-inflammatory molecules for host defense by signaling through the NF-kappa-B and MAPK pathways. Acts synergically with IL22 in inducing the expression of antibacterial peptides, including S100A8, S100A9, REG3A and REG3G. Synergy is also observed with TNF and IL1B in inducing DEFB2 from keratinocytes. Depending on the type of insult, may have both protective and pathogenic properties, either by maintaining epithelial homeostasis after an inflammatory challenge or by promoting inflammatory phenotype. Enhanced IL17C/IL17RE signaling may also lead to greater susceptibility to autoimmune diseases. The sequence is that of Interleukin-17C (IL17C) from Homo sapiens (Human).